The sequence spans 161 residues: Phosphopantetheine adenylyltransferase (161 aa).

Ser-11 is a substrate binding site. Residues 11–12 (SF) and His-19 each bind ATP. Substrate-binding residues include Lys-43, Leu-75, and Arg-89. ATP is bound by residues 90 to 92 (GLR), Glu-100, and 125 to 131 (YSFISSS).

This sequence belongs to the bacterial CoaD family. As to quaternary structure, homohexamer. The cofactor is Mg(2+).

Its subcellular location is the cytoplasm. The catalysed reaction is (R)-4'-phosphopantetheine + ATP + H(+) = 3'-dephospho-CoA + diphosphate. The protein operates within cofactor biosynthesis; coenzyme A biosynthesis; CoA from (R)-pantothenate: step 4/5. Reversibly transfers an adenylyl group from ATP to 4'-phosphopantetheine, yielding dephospho-CoA (dPCoA) and pyrophosphate. The polypeptide is Phosphopantetheine adenylyltransferase (Staphylococcus epidermidis (strain ATCC 35984 / DSM 28319 / BCRC 17069 / CCUG 31568 / BM 3577 / RP62A)).